The following is a 270-amino-acid chain: MTQLPPPEQTVLKPAPPELASAPLFDHLEELRRRLILSVVFLAVGMVIAFTYRVQLIELVKVPLTYSELYTTGKVQLVTTKLASQLLLSFNLAFWAGLTLALPFIVWQIWAFIAPGLYPQERRWGLPFILGAGFAFAAGVVFGYKLVLPTMVPFLIEFLAGTVTQMQDLQEYIGTVVTFLVAFGVAFELPILAVILTRLGIVNHTMLRQGWRFALIGIMILAAVITPTPDPANMALVAVPLYALYELGVVLSRVFRVIAPEEQERPAPMS.

6 helical membrane-spanning segments follow: residues leucine 35 to glutamine 55, alanine 93 to isoleucine 113, tryptophan 124 to tyrosine 144, valine 176 to leucine 196, glutamine 209 to proline 229, and proline 231 to leucine 251.

This sequence belongs to the TatC family. Forms a complex with TatA.

It is found in the cell membrane. Its function is as follows. Part of the twin-arginine translocation (Tat) system that transports large folded proteins containing a characteristic twin-arginine motif in their signal peptide across membranes. The protein is Sec-independent protein translocase protein TatC of Deinococcus radiodurans (strain ATCC 13939 / DSM 20539 / JCM 16871 / CCUG 27074 / LMG 4051 / NBRC 15346 / NCIMB 9279 / VKM B-1422 / R1).